A 372-amino-acid chain; its full sequence is DNA double-strand break repair protein Mre11 (372 aa).

Mn(2+) contacts are provided by Asp8, His10, Asp49, and Asn84. His85 serves as the catalytic Proton donor. The Mn(2+) site is built by His161, His190, and His192.

Belongs to the MRE11/RAD32 family. In terms of assembly, homodimer. Forms a heterotetramer composed of two Mre11 subunits and two Rad50 subunits. Mn(2+) serves as cofactor.

With respect to regulation, nuclease activity is regulated by Rad50. In terms of biological role, part of the Rad50/Mre11 complex, which is involved in the early steps of DNA double-strand break (DSB) repair. The complex may facilitate opening of the processed DNA ends to aid in the recruitment of HerA and NurA. Mre11 binds to DSB ends and has both double-stranded 3'-5' exonuclease activity and single-stranded endonuclease activity. This chain is DNA double-strand break repair protein Mre11, found in Methanococcus maripaludis (strain DSM 14266 / JCM 13030 / NBRC 101832 / S2 / LL).